Consider the following 512-residue polypeptide: MSDKLIIFDTTLRDGEQSPGASMTRDEKLRIARQLERLRVDVIEAGFAASSNGDFEAVQAIAQAIKDSTVCSLSRANDRDIARAAEALKDAQRARIHTFIATSPLHMEKKLRMTPEQVLEQAKQSVRFARNLVADIEFSPEDGYRSEPDFLCRVLEAVIAEGATTINVPDTVGYAIPELYGNFIRNLRERIPNSDKAVWSVHCHNDLGMAVANSLAGVKIGGARQVECTINGLGERAGNCSLEEIVMAVKTRRDYFGLELGIDTQHIVAASRMVSQTTGFVVQPNKAVVGANAFAHASGIHQDGVLKARDTYEIMRAEDVGWTANKIVLGKLSGRNAFKQRLQDLGVQLESEADVNAAFLRFKELADRKSEIFDEDILALVSGDATAGAGERYGFVSLSQRSETGERPHAAVVFTVDGKEVHGASEGNGPVDASLKAIESHVHSGAEMVLYSVNAISGSTESQGEVTVRLQDSGRVVNGVGADPDIVVASAKAYLSALNKLQSKAERVAAQG.

Positions Leu5–Val268 constitute a Pyruvate carboxyltransferase domain. Residues Asp14, His202, His204, and Asn239 each coordinate Mn(2+). The regulatory domain stretch occupies residues Gly394–Gly512.

Belongs to the alpha-IPM synthase/homocitrate synthase family. LeuA type 1 subfamily. As to quaternary structure, homodimer. It depends on Mn(2+) as a cofactor.

Its subcellular location is the cytoplasm. It catalyses the reaction 3-methyl-2-oxobutanoate + acetyl-CoA + H2O = (2S)-2-isopropylmalate + CoA + H(+). The protein operates within amino-acid biosynthesis; L-leucine biosynthesis; L-leucine from 3-methyl-2-oxobutanoate: step 1/4. Catalyzes the condensation of the acetyl group of acetyl-CoA with 3-methyl-2-oxobutanoate (2-ketoisovalerate) to form 3-carboxy-3-hydroxy-4-methylpentanoate (2-isopropylmalate). This Paracidovorax citrulli (strain AAC00-1) (Acidovorax citrulli) protein is 2-isopropylmalate synthase.